The chain runs to 220 residues: MKIDILDKGFVELVDVMGNDLSAVRAARVSFDMGLKDEERDRHLIEYLMRYGHETPFEHIVFTFHVKAPIFVARQWFRHRIASYNELSGRYSKLSYEFYIPSPERLEGYKTTIPPEQVTEKISEIVDKAYRTYLELIESGVPREVARIVLPLNLYTRFFWTVNARSLMNFLNLRADSHAQWEIQQYALAIARIFKEKCPWTFEAFLKYAYKGDILKEVQV.

One can recognise a ThyX domain in the interval 1–208 (MKIDILDKGF…PWTFEAFLKY (208 aa)). FAD is bound by residues Thr55, 78–80 (RHR), and Glu86. Residues 75–78 (QWFR), 86–90 (ELSGR), and Arg147 contribute to the dUMP site. Positions 78 to 88 (RHRIASYNELS) match the ThyX motif motif. FAD contacts are provided by residues 163–165 (NAR) and Asn169. Arg174 lines the dUMP pocket. Arg174 (involved in ionization of N3 of dUMP, leading to its activation) is an active-site residue.

This sequence belongs to the thymidylate synthase ThyX family. As to quaternary structure, homotetramer. It depends on FAD as a cofactor.

It carries out the reaction dUMP + (6R)-5,10-methylene-5,6,7,8-tetrahydrofolate + NADPH + H(+) = dTMP + (6S)-5,6,7,8-tetrahydrofolate + NADP(+). It functions in the pathway pyrimidine metabolism; dTTP biosynthesis. Functionally, catalyzes the reductive methylation of 2'-deoxyuridine-5'-monophosphate (dUMP) to 2'-deoxythymidine-5'-monophosphate (dTMP) while utilizing 5,10-methylenetetrahydrofolate (mTHF) as the methyl donor, and NADPH and FADH(2) as the reductant. The chain is Flavin-dependent thymidylate synthase from Thermotoga sp. (strain RQ2).